The sequence spans 344 residues: 4-hydroxy-2-oxovalerate aldolase (344 aa).

In terms of domain architecture, Pyruvate carboxyltransferase spans 8–260; that stretch reads VTLHDMSLRD…NHGIDLYKIM (253 aa). Residue 16–17 participates in substrate binding; sequence RD. Position 17 (Asp-17) interacts with Mn(2+). Residue His-20 is the Proton acceptor of the active site. The substrate site is built by Ser-170 and His-199. Mn(2+)-binding residues include His-199 and His-201. Residue Tyr-290 participates in substrate binding.

Belongs to the 4-hydroxy-2-oxovalerate aldolase family.

It catalyses the reaction (S)-4-hydroxy-2-oxopentanoate = acetaldehyde + pyruvate. This Pseudoalteromonas translucida (strain TAC 125) protein is 4-hydroxy-2-oxovalerate aldolase (mhpE).